Here is a 167-residue protein sequence, read N- to C-terminus: Thioredoxin Y2, chloroplastic (167 aa).

Residues M1–R58 constitute a chloroplast transit peptide. Positions A59–Q164 constitute a Thioredoxin domain. Catalysis depends on nucleophile residues C88 and C91. A disulfide bond links C88 and C91.

It belongs to the thioredoxin family. Plant Y-type subfamily. In terms of tissue distribution, expressed in leaves.

The protein resides in the plastid. It is found in the chloroplast stroma. In terms of biological role, thiol-disulfide oxidoreductase that poorly activates chloroplastic malate dehydrogenase (NADP-MDH) and fructose-1,6-bisphosphatase. Provides reducing equivalents for peroxiredoxin Q. In Arabidopsis thaliana (Mouse-ear cress), this protein is Thioredoxin Y2, chloroplastic.